Consider the following 504-residue polypeptide: DnaJ homolog subfamily C member 3 (504 aa).

The N-terminal stretch at 1-31 (MVAPGSVTSRLGSVFPFLLVLVDLQYEGAEC) is a signal peptide. TPR repeat units follow at residues 37–70 (VEKH…DPDN), 72–104 (IAYY…KMDF), 105–138 (TAAR…NPSE), 154–187 (MQRL…CVWD), 189–221 (ELRE…KNDN), 222–255 (TEAF…DQDH), 268–301 (LNKL…EPSI), 306–339 (VRSK…EPDN), and 340–373 (VNAL…NEND). Cysteine 248 and cysteine 258 are disulfide-bonded. Serine 274 carries the phosphoserine; by FAM20C modification. A disulfide bridge connects residues cysteine 313 and cysteine 329. A flexible linker region spans residues 375–393 (QIREGLEKAQRLLKQSQKR). The region spanning 394 to 462 (DYYKILGVKR…EMRKKFDDGE (69 aa)) is the J domain. The segment at 451 to 481 (DPEMRKKFDDGEDPLDAESQQGGGGNPFHRS) is disordered.

Interacts with EIF2AK4/GCN2; this interaction occurs under endoplasmic reticulum (ER) stress, hypothermic and amino acid starving stress conditions and inhibits EIF2AK4/GCN2 kinase activity. Interacts with EIF2AK3. Interacts with EIF2AK2. Forms a trimeric complex with DNAJB1 and HSPA8. Interacts with THAP12. Widely expressed with high level in the pancreas and testis. Also expressed in cell lines with different levels.

Its subcellular location is the endoplasmic reticulum. Functionally, involved in the unfolded protein response (UPR) during endoplasmic reticulum (ER) stress. Acts as a negative regulator of the EIF2AK4/GCN2 kinase activity by preventing the phosphorylation of eIF-2-alpha at 'Ser-52' and hence attenuating general protein synthesis under ER stress, hypothermic and amino acid starving stress conditions. Co-chaperone of HSPA8/HSC70, it stimulates its ATPase activity. May inhibit both the autophosphorylation of EIF2AK2/PKR and the ability of EIF2AK2 to catalyze phosphorylation of the EIF2A. May inhibit EIF2AK3/PERK activity. This chain is DnaJ homolog subfamily C member 3 (DNAJC3), found in Homo sapiens (Human).